The chain runs to 84 residues: MKTLLLTLVVVTIVCLDLGYTRKCLNTPLPLIYTTCPIGQDKCVKMTIKKLPSKYDVIRGCTDICPKSSADVVVVCCDTNKCDK.

The signal sequence occupies residues 1-21 (MKTLLLTLVVVTIVCLDLGYT). Disulfide bonds link Cys-24-Cys-43, Cys-36-Cys-61, Cys-65-Cys-76, and Cys-77-Cys-82.

This sequence belongs to the three-finger toxin family. Short-chain subfamily. Aminergic toxin sub-subfamily. Expressed by the venom gland.

Its subcellular location is the secreted. In terms of biological role, acts as a beta-blocker by binding to beta-1 and beta-2 adrenergic receptors (ADRB1 and ADRB2). It dose-dependently decreases the heart rate (bradycardia), whereas conventional cardiotoxins increases it. At 100 mg/kg, intraperitoneal injection into mice provokes labored breathing, impaired locomotion, lack of response to external stimuli, and death (after 30 minutes). The polypeptide is Beta-cardiotoxin CTX14 (Ophiophagus hannah (King cobra)).